A 372-amino-acid polypeptide reads, in one-letter code: Alanine racemase (372 aa).

Residue K48 is the Proton acceptor; specific for D-alanine of the active site. At K48 the chain carries N6-(pyridoxal phosphate)lysine. R143 provides a ligand contact to substrate. Residue Y268 is the Proton acceptor; specific for L-alanine of the active site. M316 serves as a coordination point for substrate.

Belongs to the alanine racemase family. Pyridoxal 5'-phosphate serves as cofactor.

The enzyme catalyses L-alanine = D-alanine. It functions in the pathway amino-acid biosynthesis; D-alanine biosynthesis; D-alanine from L-alanine: step 1/1. Its function is as follows. Catalyzes the interconversion of L-alanine and D-alanine. May also act on other amino acids. The sequence is that of Alanine racemase (alr) from Vibrio vulnificus (strain YJ016).